We begin with the raw amino-acid sequence, 452 residues long: Phosphoglucosamine mutase (452 aa).

Ser108 (phosphoserine intermediate) is an active-site residue. 4 residues coordinate Mg(2+): Ser108, Asp247, Asp249, and Asp251. Residue Ser108 is modified to Phosphoserine.

This sequence belongs to the phosphohexose mutase family. Requires Mg(2+) as cofactor. Post-translationally, activated by phosphorylation.

The enzyme catalyses alpha-D-glucosamine 1-phosphate = D-glucosamine 6-phosphate. Its function is as follows. Catalyzes the conversion of glucosamine-6-phosphate to glucosamine-1-phosphate. The chain is Phosphoglucosamine mutase from Paraburkholderia phymatum (strain DSM 17167 / CIP 108236 / LMG 21445 / STM815) (Burkholderia phymatum).